The following is a 470-amino-acid chain: Growth/differentiation factor 6 (470 aa).

Positions 1-22 (MDTSRVLLSAVFLISFLWDLPG) are cleaved as a signal peptide. The propeptide occupies 23 to 350 (FQQASISSSS…SPSPGRRRRR (328 aa)). The tract at residues 28–98 (ISSSSSSAEL…REPPGRGPRV (71 aa)) is disordered. Residues 45–80 (SRKEGRMPRAPRENATAREPLDRQEPPPRPQEEPQR) are compositionally biased toward basic and acidic residues. Asn120 carries N-linked (GlcNAc...) asparagine glycosylation. Disordered stretches follow at residues 247 to 272 (PGAAEDEARAPGPQQPPPPDLRSLGF) and 308 to 366 (TEVV…KKSR). The span at 321–333 (GPPPPPPPPPPSG) shows a compositional bias: pro residues. Over residues 345-366 (GRRRRRTAFASRHGKRHGKKSR) the composition is skewed to basic residues. 3 disulfide bridges follow: Cys369–Cys435, Cys398–Cys467, and Cys402–Cys469.

This sequence belongs to the TGF-beta family. In terms of assembly, homodimer; disulfide-linked.

The protein localises to the secreted. Its function is as follows. Growth factor that controls proliferation and cellular differentiation in the retina and bone formation. Plays a key role in regulating apoptosis during retinal development. Establishes dorsal-ventral positional information in the retina and controls the formation of the retinotectal map. Required for normal formation of bones and joints in the limbs, skull, digits and axial skeleton. Plays a key role in establishing boundaries between skeletal elements during development. Regulation of GDF6 expression seems to be a mechanism for evolving species-specific changes in skeletal structures. Seems to positively regulate differentiation of chondrogenic tissue through the growth factor receptors subunits BMPR1A, BMPR1B, BMPR2 and ACVR2A, leading to the activation of SMAD1-SMAD5-SMAD8 complex. The regulation of chondrogenic differentiation is inhibited by NOG. Also involved in the induction of adipogenesis from mesenchymal stem cells. This mechanism acts through the growth factor receptors subunits BMPR1A, BMPR2 and ACVR2A and the activation of SMAD1-SMAD5-SMAD8 complex and MAPK14/p38. The protein is Growth/differentiation factor 6 (GDF6) of Bos taurus (Bovine).